The primary structure comprises 271 residues: Tryptophan synthase alpha chain (271 aa).

Active-site proton acceptor residues include E56 and D67.

It belongs to the TrpA family. As to quaternary structure, tetramer of two alpha and two beta chains.

The enzyme catalyses (1S,2R)-1-C-(indol-3-yl)glycerol 3-phosphate + L-serine = D-glyceraldehyde 3-phosphate + L-tryptophan + H2O. Its pathway is amino-acid biosynthesis; L-tryptophan biosynthesis; L-tryptophan from chorismate: step 5/5. Functionally, the alpha subunit is responsible for the aldol cleavage of indoleglycerol phosphate to indole and glyceraldehyde 3-phosphate. The chain is Tryptophan synthase alpha chain from Mycobacterium intracellulare.